Consider the following 511-residue polypeptide: Voltage-gated potassium channel KCNC1 (511 aa).

Residues 1–190 (MGQGDESERI…EDPYSSRYAR (190 aa)) are Cytoplasmic-facing. S44 carries the phosphoserine modification. Zn(2+) contacts are provided by H77, C83, C104, and C105. Residues 121-147 (SFGGAPLDNSADDADADGPGDSGDGED) form a disordered region. Phosphoserine occurs at positions 130, 142, 158, and 160. A compositionally biased stretch (acidic residues) spans 130 to 147 (SADDADADGPGDSGDGED). Residues 191–209 (YVAFASLFFILVSITTFCL) traverse the membrane as a helical segment. 2 N-linked (GlcNAc...) asparagine glycosylation sites follow: N220 and N229. A helical membrane pass occupies residues 248-267 (IEGVCVVWFTFEFLMRVVFC). The Cytoplasmic portion of the chain corresponds to 268–276 (PNKVEFIKN). Residues 277–295 (SLNIIDFVAILPFYLEVGL) form a helical membrane-spanning segment. Residues 309-331 (FLRVVRFVRILRIFKLTRHFVGL) form a helical; Voltage-sensor membrane-spanning segment. Residues 332–344 (RVLGHTLRASTNE) are Cytoplasmic-facing. Residues 345 to 366 (FLLLIIFLALGVLIFATMIYYA) form a helical membrane-spanning segment. 4 residues coordinate K(+): T400, L401, G402, and Y403. Residues 400-405 (TLGYGD) carry the Selectivity filter motif. Residues 415–436 (LVGALCALAGVLTIAMPVPVIV) traverse the membrane as a helical segment. Residues 437-511 (NNFGMYYSLA…GRKPLRGMSI (75 aa)) are Cytoplasmic-facing. S474 is modified (phosphoserine). The residue at position 483 (T483) is a Phosphothreonine.

It belongs to the potassium channel family. C (Shaw) (TC 1.A.1.2) subfamily. Kv3.1/KCNC1 sub-subfamily. Homotetramer. Homomultimer. Heteromultimer with KCNG3, KCNG4 and KCNV2. Heteromultimer with KCNC2. Heterotetramer with KCNC3. Interacts with the ancillary subunits KCNE1 and KCNE2; the interaction modulates channel activity. In terms of processing, N-glycosylated; contains sialylated glycans. As to expression, detected in cerebellum. Detected in brain (at protein level). Detected in brain.

It localises to the cell membrane. It is found in the cell projection. The protein resides in the axon. The protein localises to the presynaptic cell membrane. The catalysed reaction is K(+)(in) = K(+)(out). In terms of biological role, voltage-gated potassium channel that opens in response to the voltage difference across the membrane and through which potassium ions pass in accordance with their electrochemical gradient. The mechanism is time-dependent and inactivation is slow. Plays an important role in the rapid repolarization of fast-firing brain neurons. Can form functional homotetrameric channels and heterotetrameric channels that contain variable proportions of KCNC2, and possibly other family members as well. Contributes to fire sustained trains of very brief action potentials at high frequency in pallidal neurons. The protein is Voltage-gated potassium channel KCNC1 of Mus musculus (Mouse).